The primary structure comprises 315 residues: MGQKVNPHGFRLGITSEFTSRWYADKQYKAYVGEDVKIRKMMSRGMERAGISRVDIERTQGRLRVDIHTARPGIVIGRRGAEADRIRGDLEKLTGKQVQLNILEVKNPEVDAQLVAQGVAEQLSSRVSFRRAMRKAMQTAMKGGAKGIRVQCSGRLGGAEMSRSEFYREGRVPLHTLRADIDYGFYEARTNFGRIGVKVWIYKGDIVQSRAEREAQEALQRQTRRERPRRGPRSGSSGTTQGGTEAGRAAARGERRGRGGGGGNAPAETPAGEAAATEPTAPVAEPATAAASAPAEAASAPAEAAVANTPEKAEE.

One can recognise a KH type-2 domain in the interval 38–106; it reads IRKMMSRGME…QVQLNILEVK (69 aa). The tract at residues 211–315 is disordered; sequence AEREAQEALQ…VANTPEKAEE (105 aa). The segment covering 222 to 232 has biased composition (basic residues); it reads QTRRERPRRGP. A compositionally biased stretch (low complexity) spans 265–315; it reads APAETPAGEAAATEPTAPVAEPATAAASAPAEAASAPAEAAVANTPEKAEE.

It belongs to the universal ribosomal protein uS3 family. In terms of assembly, part of the 30S ribosomal subunit. Forms a tight complex with proteins S10 and S14.

Its function is as follows. Binds the lower part of the 30S subunit head. Binds mRNA in the 70S ribosome, positioning it for translation. The polypeptide is Small ribosomal subunit protein uS3 (Frankia casuarinae (strain DSM 45818 / CECT 9043 / HFP020203 / CcI3)).